Reading from the N-terminus, the 293-residue chain is MNEEITLLAAAADPAATENIGWVQTIVLSIVQGLTEFLPISSSGHLRIISELFWGADAGASFTAVVQLGTEAAVLVFFAKEIWQIITGWFAGVFNKERRGFEYRMGWMIIVATIPVVILGVLGKDLIREALRNMWITASVLILFSLVFILAEKMGKKERDYDKLTMKDAIIMGLAQCLALIPGVSRSGGTISAGLFLGLKREVATKFSFLLAIPAVLGSGLYSLPDAFAPSSGQAASGLQLTVGTLFAFVVGYISIAWLMKFVANHSFSWFAAYRIPAGLLVMLLLALGMLNP.

6 helical membrane-spanning segments follow: residues 74 to 94 (VLVF…AGVF), 107 to 127 (WMII…KDLI), 134 to 154 (MWIT…AEKM), 209 to 229 (FLLA…DAFA), 243 to 263 (VGTL…MKFV), and 271 to 291 (FAAY…LGML).

The protein belongs to the UppP family.

It localises to the cell membrane. The catalysed reaction is di-trans,octa-cis-undecaprenyl diphosphate + H2O = di-trans,octa-cis-undecaprenyl phosphate + phosphate + H(+). Functionally, catalyzes the dephosphorylation of undecaprenyl diphosphate (UPP). Confers resistance to bacitracin. The chain is Undecaprenyl-diphosphatase from Corynebacterium glutamicum (strain R).